The chain runs to 514 residues: Bifunctional NAD(P)H-hydrate repair enzyme Nnr (514 aa).

Residues M1–V218 are NAD(P)H-hydrate epimerase. A YjeF N-terminal domain is found at I9–N215. The interval N59–D63 is NADPHX 1; for epimerase activity. 2 residues coordinate K(+): N60 and D125. Positions G129–E135 are NADPHX 1; for epimerase activity. D158 contacts (6S)-NADPHX. S161 provides a ligand contact to K(+). The YjeF C-terminal domain maps to D226 to V508. The ADP-dependent (S)-NAD(P)H-hydrate dehydratase stretch occupies residues D226–V514. G333 contacts (6S)-NADPHX. Positions H382–R388 are NADPHX 2; for dehydratase activity. Residues K419 to S423 and D439 to G448 contribute to the ADP site. D449 contributes to the (6S)-NADPHX binding site.

The protein in the N-terminal section; belongs to the NnrE/AIBP family. In the C-terminal section; belongs to the NnrD/CARKD family. The cofactor is K(+).

It carries out the reaction (6S)-NADHX + ADP = AMP + phosphate + NADH + H(+). It catalyses the reaction (6S)-NADPHX + ADP = AMP + phosphate + NADPH + H(+). The catalysed reaction is (6R)-NADHX = (6S)-NADHX. The enzyme catalyses (6R)-NADPHX = (6S)-NADPHX. In terms of biological role, bifunctional enzyme that catalyzes the epimerization of the S- and R-forms of NAD(P)HX and the dehydration of the S-form of NAD(P)HX at the expense of ADP, which is converted to AMP. This allows the repair of both epimers of NAD(P)HX, a damaged form of NAD(P)H that is a result of enzymatic or heat-dependent hydration. The sequence is that of Bifunctional NAD(P)H-hydrate repair enzyme Nnr (nnr) from Dictyoglomus turgidum (strain DSM 6724 / Z-1310).